The following is a 105-amino-acid chain: UPF0145 protein HD_1349 (105 aa).

The protein belongs to the UPF0145 family.

The protein is UPF0145 protein HD_1349 of Haemophilus ducreyi (strain 35000HP / ATCC 700724).